The following is a 1332-amino-acid chain: MTERIPIKNYQRTNAKALLKLTEKLFNKNFFDLYLTSQQLVVLEYLLSISSEEDKLKAWDYFLKGNIALNVEKSFPLTQEEEHHGAVSPAVDTRSDDVSSQTIKDNNNTNTNTSISNENHVENEIEDKGDNAIANEDNFVNNDESDNVEEDLFKLDLEDLKQQISGTRFIGNLSLKIRYVLWQCAIDYIYCDRNEFGDENDTEYTLLDVEEKEEEEIGKNEKPQNKEGISKFAEDEDYDDEDENYDEDSTDVKNVDDPPKNLDSISSSNIEIDDERRLVLNISISKETLSKLKTNNVEEIMGNWNKIYHSFEYDKETMIKRLKLEESDKMIEKGKKKRSRSDLEAATDEQDRENTNDEPDTNQKLPTPEGSTFSDTGNKRPKQSNLDLTVNLGIENLSLKHLLSSIQQKKSQLGISDYELKHLIMDVRKNRSKWTSDERIGQEELYEACEKVVLELRNYTEHSTPFLNKVSKREAPNYHQIIKKSMDLNTVLKKLKSFQYDSKQEFVDDIMLIWKNCLTYNSDPSHFLRGHAIAMQKKSLQLIRMIPNITIRNRADLEKEIEDMEKDKDYELDEEEEVAGSGRKGLNMGAHMLAKENGKVSEKDSSKTVKDEAPTNDDKLTSVIPEGEKEKDKTASSTVTVHENVNKNEIKENGKNEEQDMVEESSKTEDSSKDADAAKKDTEDGLQDKTAENKEAGENNEEEEDDDDEDEDEDMVDSQSYLLEKDDDRDDLEISVWKTVTAKVRAEICLKRTEYFKNGKLNSDSEAFLKNPQRMKRFDQLFLEYKEQKALESYRQKIEQNSIMKNGFGTVLKQEDDDQLQFHNDHSLNGNEAFEKQPNDIELDDTRFLQEYDISNAIPDIVYEGVNTKTLDKMEDASVDRMLQNGINKQSRFLANKDLGLTPKMNQNITLIQQIRHICHKISLIRMLQSPLSAQNSRSNPNAFLNNHIYNYTIIDDSLDIDPVSQLPTHDYKNNRELIWKFMHKNISKVAMANGFETAHPSAINMLTEIAGDYLSNLIKTLKLHHETNSLNRGTNVEMLQTTLLENGINRPDDLFSYVESEFGKKTKKLQDIKQKLESFLRALLRPTLQELSERNFEDESQSFFTGDFASELTGEDFFGFRELGLEKEFGVLSSSVPLQLLTTQFQTVDGETKVQAKKIQPEESDSIVYKKITKGMLDAGSFWNTLLPLLQKDYERSKAYIAKQSKSSANDKTSMTSTEDNSFALLEEDQFVSKKTATKARLPPTGKISTTYKKKPIASAFILPEEDLENDVKADPTTTVNAKVGAENDGDSSLFLRTPQPLDPLDMDDAFDDTNMGSNSSFSLSLPRLNQ.

Thr-78 carries the phosphothreonine; by ATM or ATR modification. 3 disordered regions span residues 80 to 118 (EEEH…ISNE), 209 to 268 (VEEK…ISSS), and 331 to 384 (IEKG…PKQS). Ser-88 bears the Phosphoserine mark. The segment covering 106-118 (NNNTNTNTSISNE) has biased composition (low complexity). The segment covering 217–233 (IGKNEKPQNKEGISKFA) has biased composition (basic and acidic residues). A compositionally biased stretch (acidic residues) spans 234-249 (EDEDYDDEDENYDEDS). Residues 250–260 (TDVKNVDDPPK) show a composition bias toward basic and acidic residues. Positions 345 to 360 (AATDEQDRENTNDEPD) are enriched in acidic residues. Positions 362 to 376 (NQKLPTPEGSTFSDT) are enriched in polar residues. One can recognise a Bromo domain in the interval 440 to 546 (IGQEELYEAC…KKSLQLIRMI (107 aa)). Residues 566–578 (KDKDYELDEEEEV) are compositionally biased toward acidic residues. Disordered stretches follow at residues 566–724 (KDKD…YLLE) and 1286–1332 (GAEN…RLNQ). Composition is skewed to basic and acidic residues over residues 593–634 (LAKE…KDKT) and 644–697 (NVNK…KEAG). Positions 698–716 (ENNEEEEDDDDEDEDEDMV) are enriched in acidic residues. Ser-1293 carries the phosphoserine modification. A compositionally biased stretch (polar residues) spans 1316-1332 (NMGSNSSFSLSLPRLNQ).

As to quaternary structure, component of the 1.8 MDa SAGA (Spt-Ada-Gcn5 acetyltransferase) complex, which is composed of 19 subunits TRA1, SPT7, TAF5, NGG1/ADA3, SGF73, SPT20/ADA5, SPT8, TAF12, TAF6, HFI1/ADA1, UBP8, GCN5, ADA2, SPT3, SGF29, TAF10, TAF9, SGF11 and SUS1. The SAGA complex is composed of 4 modules, namely the HAT (histone acetyltransferase) module (GCN5, ADA2, NGG1/ADA3 and SGF29), the DUB (deubiquitinating) module (UBP8, SGF11, SGF73 and SUS1), the core or TAF (TBP-associated factor) module (TAF5, TAF6, TAF9, TAF10 and TAF12), and the Tra1 or SPT (Suppressor of Ty) module (TRA1, HFI1/ADA1, SPT3, SPT7, SPT8 and SPT20/ADA5). The Tra1/SPT module binds activators, the core module recruits TBP (TATA-binding protein), the HAT module contains the histone H3 acetyltransferase GCN5, and the DUB module comprises the histone H2B deubiquitinase UBP8. Also identified in an altered form of SAGA, named SALSA (SAGA altered, Spt8 absent) or SLIK (SAGA-like) complex, which contains a C-terminal truncated form of SPT7 and is missing SPT8. However, it has been shown that the SAGA and SAGA-like SALSA/SLIK transcriptional coactivators are structurally and biochemically equivalent. Identified in the Ada.spt complex with NGG1/ADA3 and TRA1. In terms of processing, protease PEP4 directly cleaves the C-terminus of SPT7(SAGA) to form SPT7(SLIK) within the SAGA complex in the nucleus.

The protein resides in the nucleus. Its function is as follows. Component of the transcription coactivator SAGA complex. SAGA acts as a general cofactor required for essentially all RNA polymerase II transcription. At the promoters, SAGA is required for transcription pre-initiation complex (PIC) recruitment. It influences RNA polymerase II transcriptional activity through different activities such as TBP interaction (via core/TAF module) and promoter selectivity, interaction with transcription activators (via Tra1/SPT module), and chromatin modification through histone acetylation (via HAT module) and deubiquitination (via DUB module). SAGA preferentially acetylates histones H3 (to form H3K9ac, H3K14ac, H3K18ac and H3K23ac) and H2B and deubiquitinates histone H2B. SAGA interacts with DNA via upstream activating sequences (UASs). Also identified in a modified version of SAGA named SALSA or SLIK. The cleavage of SPT7 and the absence of the SPT8 subunit in SLIK neither drive any major conformational differences in its structure compared with SAGA, nor significantly affect HAT, DUB, or DNA-binding activities. The polypeptide is SAGA complex subunit SPT7 (SPT7) (Saccharomyces cerevisiae (strain ATCC 204508 / S288c) (Baker's yeast)).